We begin with the raw amino-acid sequence, 449 residues long: Exodeoxyribonuclease 7 large subunit (449 aa).

The protein belongs to the XseA family. Heterooligomer composed of large and small subunits.

Its subcellular location is the cytoplasm. It catalyses the reaction Exonucleolytic cleavage in either 5'- to 3'- or 3'- to 5'-direction to yield nucleoside 5'-phosphates.. Bidirectionally degrades single-stranded DNA into large acid-insoluble oligonucleotides, which are then degraded further into small acid-soluble oligonucleotides. The chain is Exodeoxyribonuclease 7 large subunit from Aliivibrio fischeri (strain ATCC 700601 / ES114) (Vibrio fischeri).